The primary structure comprises 244 residues: Mitophagy receptor atg43 (244 aa).

A disordered region spans residues 1-24 (MSSESKGIPIPRSDSNKTSDVSSW). Topologically, residues 1 to 198 (MSSESKGIPI…LVALITLRDH (198 aa)) are cytoplasmic. Positions 28-31 (YELI) match the atg8 interacting motif (AIM) motif. Residues 105-131 (SLSLLQSKEEDDSSNWETEDSESAVEE) form a disordered region. Acidic residues predominate over residues 113–131 (EEDDSSNWETEDSESAVEE). Residues 165 to 184 (PPIPDLRFQQSYLQSIQRAN) form an involved in MIM complex binding. Required for normal vegetative cell population growth but is dispensable for mitophagy region. The helical transmembrane segment at 199–215 (VLYPFLSGGMWVFVRHI) threads the bilayer. Residues 216-244 (FQFLKLQEKGFHFGQSLRRNLGLFSTFKD) lie on the Mitochondrial intermembrane side of the membrane.

As to quaternary structure, interacts (via N-terminal atg8 interacting motif) with atg8; the interaction is direct. Interacts with the mitochondrial outer import machinery (MIM) complex subunits mim1 and mim2.

Its subcellular location is the mitochondrion outer membrane. Mitophagy receptor that tethers atg8 to the mitochondrial outer membrane to promote selective autophagy. This chain is Mitophagy receptor atg43, found in Schizosaccharomyces pombe (strain 972 / ATCC 24843) (Fission yeast).